Consider the following 511-residue polypeptide: GMP synthase [glutamine-hydrolyzing] (511 aa).

The region spanning 3–193 is the Glutamine amidotransferase type-1 domain; that stretch reads KILILDFGGQ…VYSICDVAGD (191 aa). Cysteine 80 functions as the Nucleophile in the catalytic mechanism. Catalysis depends on residues histidine 167 and glutamate 169. The GMPS ATP-PPase domain occupies 194 to 384; it reads WEPKNIKLEK…LDIPYQNVYR (191 aa). 221 to 227 provides a ligand contact to ATP; that stretch reads SGGVDSL.

As to quaternary structure, homodimer.

It catalyses the reaction XMP + L-glutamine + ATP + H2O = GMP + L-glutamate + AMP + diphosphate + 2 H(+). The protein operates within purine metabolism; GMP biosynthesis; GMP from XMP (L-Gln route): step 1/1. Functionally, catalyzes the synthesis of GMP from XMP. This is GMP synthase [glutamine-hydrolyzing] from Malacoplasma penetrans (strain HF-2) (Mycoplasma penetrans).